Consider the following 121-residue polypeptide: Large ribosomal subunit protein bL20 (121 aa).

The protein belongs to the bacterial ribosomal protein bL20 family.

In terms of biological role, binds directly to 23S ribosomal RNA and is necessary for the in vitro assembly process of the 50S ribosomal subunit. It is not involved in the protein synthesizing functions of that subunit. This Wolbachia pipientis subsp. Culex pipiens (strain wPip) protein is Large ribosomal subunit protein bL20.